Consider the following 274-residue polypeptide: NH(3)-dependent NAD(+) synthetase (274 aa).

46-53 (GISGGQDS) is an ATP binding site. Residue Asp52 coordinates Mg(2+). Arg140 contributes to the deamido-NAD(+) binding site. Thr160 contributes to the ATP binding site. Glu165 lines the Mg(2+) pocket. 2 residues coordinate deamido-NAD(+): Lys173 and Asp180. ATP contacts are provided by Lys189 and Thr211. 260–261 (HK) serves as a coordination point for deamido-NAD(+).

This sequence belongs to the NAD synthetase family. As to quaternary structure, homodimer.

The catalysed reaction is deamido-NAD(+) + NH4(+) + ATP = AMP + diphosphate + NAD(+) + H(+). The protein operates within cofactor biosynthesis; NAD(+) biosynthesis; NAD(+) from deamido-NAD(+) (ammonia route): step 1/1. Its function is as follows. Catalyzes the ATP-dependent amidation of deamido-NAD to form NAD. Uses ammonia as a nitrogen source. The chain is NH(3)-dependent NAD(+) synthetase from Streptococcus equi subsp. equi (strain 4047).